A 607-amino-acid polypeptide reads, in one-letter code: Guanine nucleotide-binding protein-like 1 (607 aa).

Residues 1–14 (MPRKKPFSVKQKKK) show a composition bias toward basic residues. Positions 1-81 (MPRKKPFSVK…GPRGYDPNRY (81 aa)) are disordered. Residues 15–26 (QLQDKRERKRGL) show a composition bias toward basic and acidic residues. Phosphoserine occurs at positions 32, 33, and 34. Thr48 and Thr50 each carry phosphothreonine. Residues Ser51 and Ser68 each carry the phosphoserine modification. In terms of domain architecture, CP-type G spans 178-418 (WRQLWRVLEM…LCDCPGLIFP (241 aa)). 225–228 (NKVD) contributes to the GTP binding site. Residue Ser324 is modified to Phosphoserine. GTP is bound by residues 367–374 (GFPNVGKS) and 411–415 (DCPGL). The disordered stretch occupies residues 544-607 (GRVGPAGDEE…PYALLGEGEC (64 aa)). Residues 550–585 (GDEEEEEEEELSSSCEEEGEEDRDADEEGEGDEDTP) show a composition bias toward acidic residues. A phosphoserine mark is found at Ser561, Ser562, and Ser563.

Belongs to the TRAFAC class YlqF/YawG GTPase family.

In terms of biological role, possible regulatory or functional link with the histocompatibility cluster. This chain is Guanine nucleotide-binding protein-like 1 (Gnl1), found in Rattus norvegicus (Rat).